The primary structure comprises 641 residues: Choline O-acetyltransferase (641 aa).

Ser17 carries the post-translational modification Phosphoserine. Catalysis depends on His335, which acts as the Proton acceptor. Ser366 is modified (phosphoserine). CoA contacts are provided by residues 413-425 (GKTF…CSPD), Ser451, and Gln552. The interval 615 to 641 (CSSRQPADSKPPTAKERARGPSQAKQS) is disordered.

The protein belongs to the carnitine/choline acetyltransferase family.

It catalyses the reaction choline + acetyl-CoA = acetylcholine + CoA. Its function is as follows. Catalyzes the reversible synthesis of acetylcholine (ACh) from acetyl CoA and choline at cholinergic synapses. The chain is Choline O-acetyltransferase (Chat) from Mus musculus (Mouse).